An 825-amino-acid chain; its full sequence is Ubiquitin carboxyl-terminal hydrolase 16 (825 aa).

Residues 1–20 (MGKKRTKGRSAPDTVASESA) are disordered. The UBP-type zinc finger occupies 22–141 (PVCRHLRKGL…QVVDYVRKQA (120 aa)). Zn(2+) contacts are provided by Cys-24, His-26, Cys-48, Cys-51, Cys-73, Cys-76, Cys-81, His-89, His-93, His-102, Cys-115, and Cys-118. Lys-139 participates in a covalent cross-link: Glycyl lysine isopeptide (Lys-Gly) (interchain with G-Cter in SUMO2). Over residues 164 to 180 (EKESKNEQEREKSENLA) the composition is skewed to basic and acidic residues. A disordered region spans residues 164–184 (EKESKNEQEREKSENLAKETI). Phosphoserine is present on Ser-188. The region spanning 195 to 824 (KGLSNLGNTC…QAYLLFYERI (630 aa)) is the USP domain. The Nucleophile role is filled by Cys-204. Residues 393–407 (SGKKSINDKNVKMTM) show a composition bias toward basic and acidic residues. A disordered region spans residues 393 to 456 (SGKKSINDKN…KQAKNQRRQQ (64 aa)). The segment covering 408–419 (EEEDKDSEEEKD) has biased composition (acidic residues). Position 414 is a phosphoserine (Ser-414). Residues 436-456 (HLQKKAKKQAKKQAKNQRRQQ) show a composition bias toward basic residues. Ser-520 and Ser-531 each carry phosphoserine. His-759 serves as the catalytic Proton acceptor.

Belongs to the peptidase C19 family. USP16 subfamily. In terms of assembly, homotetramer. Associates with late pre-40S ribosomes. Interacts with CEP78; promoting deubiquitination of tektins. Phosphorylated at the onset of mitosis and dephosphorylated during the metaphase/anaphase transition. Phosphorylation by AURKB enhances the deubiquitinase activity.

It localises to the nucleus. The protein localises to the cytoplasm. The catalysed reaction is Thiol-dependent hydrolysis of ester, thioester, amide, peptide and isopeptide bonds formed by the C-terminal Gly of ubiquitin (a 76-residue protein attached to proteins as an intracellular targeting signal).. Specifically deubiquitinates 'Lys-120' of histone H2A (H2AK119Ub), a specific tag for epigenetic transcriptional repression, thereby acting as a coactivator. Deubiquitination of histone H2A is a prerequisite for subsequent phosphorylation at 'Ser-11' of histone H3 (H3S10ph), and is required for chromosome segregation when cells enter into mitosis. In resting B- and T-lymphocytes, phosphorylation by AURKB leads to enhance its activity, thereby maintaining transcription in resting lymphocytes. Regulates Hox gene expression via histone H2A deubiquitination. Prefers nucleosomal substrates. Does not deubiquitinate histone H2B. Also deubiquitinates non-histone proteins, such as ribosomal protein RPS27A: deubiquitination of monoubiquitinated RPS27A promotes maturation of the 40S ribosomal subunit. Also mediates deubiquitination of tektin proteins (TEKT1, TEKT2, TEK3, TEKT4 and TEKT5), promoting their stability. This is Ubiquitin carboxyl-terminal hydrolase 16 (Usp16) from Mus musculus (Mouse).